The following is a 64-amino-acid chain: MKNKFAALVITLFVLVLAIDNVTTQCLEGCECNQESTGKTCRPKQGSNVSPAVCLAQYCYHGYC.

The N-terminal stretch at 1–18 is a signal peptide; it reads MKNKFAALVITLFVLVLA.

It belongs to the scolopendra neurotoxin 6 family. Post-translationally, contains 3 disulfide bonds. Expressed by the venom gland.

Its subcellular location is the secreted. The sequence is that of Putative neurotoxin 5 from Scolopendra mutilans (Chinese red-headed centipede).